A 117-amino-acid chain; its full sequence is Aspartate 1-decarboxylase (117 aa).

The active-site Schiff-base intermediate with substrate; via pyruvic acid is serine 25. Serine 25 is subject to Pyruvic acid (Ser). Threonine 57 serves as a coordination point for substrate. Tyrosine 58 functions as the Proton donor in the catalytic mechanism. 72 to 74 (GAA) is a substrate binding site.

It belongs to the PanD family. In terms of assembly, heterooctamer of four alpha and four beta subunits. Pyruvate is required as a cofactor. In terms of processing, is synthesized initially as an inactive proenzyme, which is activated by self-cleavage at a specific serine bond to produce a beta-subunit with a hydroxyl group at its C-terminus and an alpha-subunit with a pyruvoyl group at its N-terminus.

It localises to the cytoplasm. It carries out the reaction L-aspartate + H(+) = beta-alanine + CO2. It participates in cofactor biosynthesis; (R)-pantothenate biosynthesis; beta-alanine from L-aspartate: step 1/1. In terms of biological role, catalyzes the pyruvoyl-dependent decarboxylation of aspartate to produce beta-alanine. This is Aspartate 1-decarboxylase from Helicobacter pylori (strain ATCC 700392 / 26695) (Campylobacter pylori).